Consider the following 446-residue polypeptide: Histidine--tRNA ligase (446 aa).

It belongs to the class-II aminoacyl-tRNA synthetase family. As to quaternary structure, homodimer.

Its subcellular location is the cytoplasm. The catalysed reaction is tRNA(His) + L-histidine + ATP = L-histidyl-tRNA(His) + AMP + diphosphate + H(+). This is Histidine--tRNA ligase from Burkholderia lata (strain ATCC 17760 / DSM 23089 / LMG 22485 / NCIMB 9086 / R18194 / 383).